The following is a 67-amino-acid chain: MAKIADLTAKTDDQLAQDLGELKREQFNLRFQAATSQLEKPSRVKEVRRTIAQIKTLQTQRAAAAAK.

It belongs to the universal ribosomal protein uL29 family.

The protein is Large ribosomal subunit protein uL29 of Rhizorhabdus wittichii (strain DSM 6014 / CCUG 31198 / JCM 15750 / NBRC 105917 / EY 4224 / RW1) (Sphingomonas wittichii).